The chain runs to 951 residues: Serine/threonine-protein kinase 10 (951 aa).

The Protein kinase domain maps to 36–294; that stretch reads WEIIGELGDG…AAQLLEHPFV (259 aa). Residues 42-50 and Lys65 each bind ATP; that span reads LGDGAFGKV. Residue Asp157 is the Proton acceptor of the active site. A compositionally biased stretch (acidic residues) spans 319–330; it reads EENGEVEEEEAS. Positions 319-479 are disordered; the sequence is EENGEVEEEE…DSGSNSASES (161 aa). Residues 331–343 show a composition bias toward polar residues; the sequence is DTPSSNKSVSQSA. The segment covering 345 to 356 has biased composition (basic and acidic residues); it reads GEKDKHTGKEHV. Residues 364–373 show a composition bias toward polar residues; the sequence is PQNTDSQADI. Composition is skewed to basic and acidic residues over residues 374-394 and 410-427; these read HSQK…HDAV and HEPK…EEHG. The segment covering 429–443 has biased composition (polar residues); sequence AVSSNQRPKSSQSDR. 3 positions are modified to phosphoserine; by PLK1: Ser483, Ser487, and Ser491. The stretch at 583 to 723 forms a coiled coil; that stretch reads EQEMNSKRKF…NKKQQLLRDR (141 aa). Basic and acidic residues predominate over residues 785–800; it reads QERARLPKNQKAEAKT. The disordered stretch occupies residues 785–804; that stretch reads QERARLPKNQKAEAKTRMTM. Residues 898 to 928 adopt a coiled-coil conformation; the sequence is RENLRPRKKALEDELEHKKEEQEMFFRMNEE. A disordered region spans residues 930-951; it reads AGHPFPSNKPAKFYSFSSPEAS.

Belongs to the protein kinase superfamily. STE Ser/Thr protein kinase family. STE20 subfamily. In terms of assembly, homodimer. In terms of processing, autophosphorylates. Phosphorylated by plk1/plx1, suggesting the existence of a feedback loop with plk1/plx1. activation of the protein.

It localises to the cell membrane. It carries out the reaction L-seryl-[protein] + ATP = O-phospho-L-seryl-[protein] + ADP + H(+). The enzyme catalyses L-threonyl-[protein] + ATP = O-phospho-L-threonyl-[protein] + ADP + H(+). May act as a polo kinase kinase by mediating phosphorylation of plk1/plx1 and subsequent activation of plk1/plx1 during oocyte maturation. The polypeptide is Serine/threonine-protein kinase 10 (stk10) (Xenopus tropicalis (Western clawed frog)).